A 704-amino-acid chain; its full sequence is Meprin A subunit beta (704 aa).

A signal peptide spans 1–20 (MDARHQPWFLVFATFLLVSG). The propeptide occupies 21-64 (LPAPEKFVKDIDGGIDQDIFDINQGLGLDLFEGDIKLEANGKNS). Residues 21–654 (LPAPEKFVKD…RCEKRGSTRD (634 aa)) are Extracellular-facing. Residues 63–257 (NSIIGDHKRW…LKLNQLYNCT (195 aa)) form the Peptidase M12A domain. 3 disulfides stabilise this stretch: Cys-104-Cys-256, Cys-125-Cys-145, and Cys-266-Cys-428. His-153 contributes to the Zn(2+) binding site. Residue Glu-154 is part of the active site. Zn(2+)-binding residues include His-157 and His-163. N-linked (GlcNAc...) asparagine glycosylation is found at Asn-193, Asn-219, Asn-255, Asn-316, Asn-422, Asn-437, Asn-529, Asn-548, and Asn-593. The region spanning 261-430 (SFMDSCDFEL…INLSETRCPH (170 aa)) is the MAM domain. One can recognise an MATH domain in the interval 431-586 (HIWHIQNFTQ…GDDIYILLTV (156 aa)). Residues 607-647 (VHNACSEVVCQNGGICVVQDGRAECKCPAGEDWWYMGKRCE) form the EGF-like domain. 3 disulfide bridges follow: Cys-611/Cys-622, Cys-616/Cys-631, and Cys-633/Cys-646. A helical transmembrane segment spans residues 655-678 (TVIIAVSSTVTVFAVMLIITLVSV). Over 679–704 (YCTRRKYRKKARANTAAMTLENQHAF) the chain is Cytoplasmic. Thr-697 carries the phosphothreonine modification.

Homotetramer consisting of disulfide-linked beta subunits, or heterotetramer of two alpha and two beta subunits formed by non-covalent association of two disulfide-linked heterodimers. Interacts with MBL2 through its carbohydrate moiety. This interaction may inhibit its catalytic activity. Interacts with TSPAN8. Zn(2+) is required as a cofactor. Proteolytically activated by trypsin in the intestinal lumen and kallikrein-related peptidases in other tissues. In terms of processing, N-glycosylated; contains high mannose and/or complex biantennary structures. Post-translationally, phosphorylated by PKC at multiple sites of its cytoplasmic part. Phosphorylation dcreases activity at the cell surface, leading to diminished substrate cleavage. In terms of tissue distribution, isoform 1 is expressed in kidney, intestinal brush borders, and salivary ducts. Isoform 2 has been found in carcinoma cells.

It is found in the cell membrane. The protein resides in the secreted. It catalyses the reaction Hydrolysis of proteins, including azocasein, and peptides. Hydrolysis of 5-His-|-Leu-6, 6-Leu-|-Cys-7, 14-Ala-|-Leu-15 and 19-Cys-|-Gly-20 bonds in insulin B chain.. Its activity is regulated as follows. Strongly inhibited by fetuin-A/AHSG. Inhibited by cysteine and by the metal ion chelators EDTA and 1,10-phenanthroline. Not inhibited by 3,4-dichloroisocourmarin, soybean trypsin inhibitor, or the cysteine proteinase inhibitors iodoacetic acid and E-64. Its function is as follows. Membrane metallopeptidase that sheds many membrane-bound proteins. Exhibits a strong preference for acidic amino acids at the P1' position. Known substrates include: FGF19, VGFA, IL1B, IL18, procollagen I and III, E-cadherin, KLK7, gastrin, ADAM10, tenascin-C. The presence of several pro-inflammatory cytokine among substrates implicate MEP1B in inflammation. It is also involved in tissue remodeling due to its capability to degrade extracellular matrix components. The protein is Meprin A subunit beta (Mep1b) of Mus musculus (Mouse).